The following is a 149-amino-acid chain: Large ribosomal subunit protein bL9 (149 aa).

This sequence belongs to the bacterial ribosomal protein bL9 family.

Its function is as follows. Binds to the 23S rRNA. The sequence is that of Large ribosomal subunit protein bL9 from Xylella fastidiosa (strain M23).